The sequence spans 1861 residues: Amylopullulanase (1861 aa).

A signal peptide spans 1 to 35 (MNKKLFTNRFISFNMSLLLVLTAVFSSIPLHSVHA). Ca(2+)-binding residues include Asp248, Asn250, Asp288, Asp343, Asn401, Asp403, Asn406, Asp407, and Asp453. Residues His526 and Arg626 each coordinate substrate. The active-site Nucleophile is the Asp628. The active-site Proton donor is the Glu657. Residues 733–734 (HD), Asp793, and Arg797 contribute to the substrate site. Fibronectin type-III domains follow at residues 929–1021 (APQA…AYPI) and 1158–1252 (KPTA…VVPI). Residues 1246 to 1354 (KPDVVPIKVI…INDTVYRWRD (109 aa)) enclose the CBM20 domain. A disordered region spans residues 1448-1486 (QENNSGSGTGNNNTSTSGSNSSSTGSGSTGSTSITSNIS). The span at 1450 to 1486 (NNSGSGTGNNNTSTSGSNSSSTGSGSTGSTSITSNIS) shows a compositional bias: low complexity. SLH domains lie at 1677 to 1740 (EYDK…YSGE), 1741 to 1799 (FSDV…KEEN), and 1802 to 1861 (ATTF…SGNI).

This sequence belongs to the glycosyl hydrolase 13 family. Ca(2+) serves as cofactor. Glycosylated.

It is found in the secreted. Its subcellular location is the cell wall. The enzyme catalyses Endohydrolysis of (1-&gt;4)-alpha-D-glucosidic linkages in polysaccharides containing three or more (1-&gt;4)-alpha-linked D-glucose units.. It catalyses the reaction Hydrolysis of (1-&gt;6)-alpha-D-glucosidic linkages in pullulan, amylopectin and glycogen, and in the alpha- and beta-limit dextrins of amylopectin and glycogen.. The chain is Amylopullulanase (amyB) from Thermoanaerobacterium thermosulfurigenes (Clostridium thermosulfurogenes).